Here is an 885-residue protein sequence, read N- to C-terminus: Cytosolic carboxypeptidase-like protein 5 (885 aa).

The Peptidase M14 domain occupies 150-576 (YPFSYAECQD…AVAVAALDMA (427 aa)). Residues His247 and Glu250 each contribute to the Zn(2+) site. Disordered regions lie at residues 341–364 (SGSA…TERE) and 392–428 (ESWE…QVPP). Residues 344–356 (ALKTSNQSNTSPP) show a composition bias toward polar residues. Basic and acidic residues predominate over residues 393–408 (SWEKSGVQREAEHSDE). Positions 411-428 (SAQSRGETNSAPSEQVPP) are enriched in polar residues. Zn(2+) is bound at residue His440. The active-site Proton donor/acceptor is Glu522. Positions 606–668 (STGLTSNNRR…KSSPSFTFGT (63 aa)) are enriched in polar residues. 2 disordered regions span residues 606 to 788 (STGL…RTAL) and 866 to 885 (ALLK…SLPT). The span at 682–691 (RECKAQEKRR) shows a compositional bias: basic and acidic residues. Over residues 712-749 (LSAPVRAPLSPSSSSSSSSSSPSSSSSAPGPGSISLAG) the composition is skewed to low complexity.

The protein belongs to the peptidase M14 family. Requires Zn(2+) as cofactor.

It is found in the cytoplasm. It localises to the cytosol. Its subcellular location is the nucleus. The protein localises to the cytoskeleton. The protein resides in the spindle. It is found in the midbody. It catalyses the reaction gamma-L-glutamyl-L-glutamyl-[protein] + H2O = L-glutamyl-[protein] + L-glutamate. The catalysed reaction is (L-glutamyl)(n+1)-gamma-L-glutamyl-L-glutamyl-[protein] + H2O = (L-glutamyl)(n)-gamma-L-glutamyl-L-glutamyl-[protein] + L-glutamate. The enzyme catalyses C-terminal L-alpha-aminoacyl-L-glutamyl-[tubulin] + H2O = C-terminal L-alpha-aminoacyl-[tubulin] + L-glutamate. It carries out the reaction C-terminal L-alpha-aminoacyl-L-glutamyl-L-glutamyl-[tubulin] + H2O = C-terminal L-alpha-aminoacyl-L-glutamyl-[tubulin] + L-glutamate. Functionally, metallocarboxypeptidase that mediates deglutamylation of tubulin and non-tubulin target proteins. Catalyzes the removal of polyglutamate side chains present on the gamma-carboxyl group of glutamate residues within the C-terminal tail of alpha- and beta-tubulin. Cleaves alpha- and gamma-linked polyglutamate tubulin side-chain, as well as the branching point glutamate. Also catalyzes the removal of alpha-linked glutamate residues from the carboxy-terminus of alpha-tubulin. This Danio rerio (Zebrafish) protein is Cytosolic carboxypeptidase-like protein 5 (agbl5).